Consider the following 222-residue polypeptide: Gamma-glutamyl cyclotransferase gliK (222 aa).

The next 2 membrane-spanning stretches (helical) occupy residues 154–174 (GWWF…AAII) and 187–207 (GHVP…MWAQ).

This sequence belongs to the class-I pyridoxal-phosphate-dependent aminotransferase family.

The protein resides in the membrane. The enzyme catalyses an alpha-(gamma-L-glutamyl)-L-amino acid = 5-oxo-L-proline + an L-alpha-amino acid. The protein operates within secondary metabolite biosynthesis. In terms of biological role, gamma-glutamyl cyclotransferase; part of the gene cluster that mediates the biosynthesis of an unusual class of epipolythiodioxopiperazines (ETPs) lacking the reactive thiol group important for toxicity. Firstly, L-tyrosine is prenylated by tcpD, before undergoing condensation with L-glycine in a reaction catalyzed by the NRPS tcpP leading to the diketopiperazine (DKP) backbone. Afterwards the alpha-carbon of tyrosine is oxidized by the cytochrome P450 tcpC to form a hydroxyl group. However, in contrast other ETP biosynthesis pathways studied so far, tcpC is not able to bishydroxylate the DKP at both alpha-carbon positions, but hydroxylates the alpha-carbon of the tyrosine part and the nitrogen of the glycine part. The next steps involve an alpha,beta-elimination reaction catalyzed by tcpI, a methylation by the methyltransferase tcpN the action of the four enzyme cascade tcpG/K/J/I. Due to a dysfunctional cytochrome P450 monooxygenase tcpC, the pathway leads to the biosynthesis of probable non-toxic metabolites lacking the reactive thiol group. This Claviceps purpurea (strain 20.1) (Ergot fungus) protein is Gamma-glutamyl cyclotransferase gliK.